A 202-amino-acid polypeptide reads, in one-letter code: Imidazoleglycerol-phosphate dehydratase (202 aa).

This sequence belongs to the imidazoleglycerol-phosphate dehydratase family.

It localises to the cytoplasm. It catalyses the reaction D-erythro-1-(imidazol-4-yl)glycerol 3-phosphate = 3-(imidazol-4-yl)-2-oxopropyl phosphate + H2O. The protein operates within amino-acid biosynthesis; L-histidine biosynthesis; L-histidine from 5-phospho-alpha-D-ribose 1-diphosphate: step 6/9. The chain is Imidazoleglycerol-phosphate dehydratase from Salinibacter ruber (strain DSM 13855 / M31).